A 388-amino-acid chain; its full sequence is FMRFamide neuropeptides (388 aa).

The signal sequence occupies residues methionine 1–alanine 21. The propeptide occupies tyrosine 22–arginine 172. Residues phenylalanine 40–leucine 74 form a disordered region. A compositionally biased stretch (polar residues) spans leucine 64–leucine 74. Phenylalanine 179, phenylalanine 196, phenylalanine 208, phenylalanine 219, phenylalanine 230, phenylalanine 241, phenylalanine 253, phenylalanine 265, phenylalanine 277, phenylalanine 289, phenylalanine 301, phenylalanine 313, phenylalanine 325, phenylalanine 337, phenylalanine 346, phenylalanine 359, and phenylalanine 372 each carry phenylalanine amide. The interval glycine 360 to lysine 388 is disordered. Residues lysine 374–lysine 388 show a composition bias toward basic and acidic residues. Positions serine 375 to lysine 388 are excised as a propeptide.

The protein belongs to the FARP (FMRFamide related peptide) family. In terms of tissue distribution, in the brain, expressed in 2 large cells in the lateral neurons in each optic lobe, 2 slightly bigger cells on both sides of the tritocerebrum, around 14 small cells in the dorsal area, around 13 cells in the subesophageal ganglion, and in the central brain.

It localises to the secreted. In Musca domestica (House fly), this protein is FMRFamide neuropeptides.